The following is a 464-amino-acid chain: Protein FAM90A8 (464 aa).

Disordered stretches follow at residues 1–42 (MMAR…DPRL), 69–389 (VPAT…HDGA), and 415–437 (HSPE…SEAP). 2 stretches are compositionally biased toward basic and acidic residues: residues 74-89 (GKKE…KPRG) and 97-114 (NKDK…DPQR). The span at 180 to 197 (LASLSPLRKASLSSSSSL) shows a compositional bias: low complexity.

The protein belongs to the FAM90 family.

In Homo sapiens (Human), this protein is Protein FAM90A8 (FAM90A8).